Consider the following 384-residue polypeptide: S-adenosylmethionine synthase (384 aa).

His-15 contacts ATP. Position 17 (Asp-17) interacts with Mg(2+). A K(+)-binding site is contributed by Glu-43. L-methionine contacts are provided by Glu-56 and Gln-99. A flexible loop region spans residues 99-109 (QSPDINQGVDR). ATP contacts are provided by residues 164–166 (DAK), 230–231 (RF), Asp-239, 245–246 (RK), Ala-262, and Lys-266. Asp-239 is an L-methionine binding site. An L-methionine-binding site is contributed by Lys-270.

This sequence belongs to the AdoMet synthase family. As to quaternary structure, homotetramer; dimer of dimers. Requires Mg(2+) as cofactor. It depends on K(+) as a cofactor.

It localises to the cytoplasm. The enzyme catalyses L-methionine + ATP + H2O = S-adenosyl-L-methionine + phosphate + diphosphate. It functions in the pathway amino-acid biosynthesis; S-adenosyl-L-methionine biosynthesis; S-adenosyl-L-methionine from L-methionine: step 1/1. Catalyzes the formation of S-adenosylmethionine (AdoMet) from methionine and ATP. The overall synthetic reaction is composed of two sequential steps, AdoMet formation and the subsequent tripolyphosphate hydrolysis which occurs prior to release of AdoMet from the enzyme. The polypeptide is S-adenosylmethionine synthase (Cronobacter sakazakii (strain ATCC BAA-894) (Enterobacter sakazakii)).